Consider the following 178-residue polypeptide: MSRVGKKPIPIPAKTKVTVSNGTVTVQGEKGKLERPLHPDVELKIEGDEITVVPVVERRKITAVQGLVRSLVANMVTGVSTGFKRVLEVNGIGYKAELNGQTLNLTLGFSHPVDFPLPQGITAEVDKKNNITLEGIDNELLGQTAASIRALRPPEPYKGKGIKYAEERIIRKAGKTGA.

Belongs to the universal ribosomal protein uL6 family. In terms of assembly, part of the 50S ribosomal subunit.

This protein binds to the 23S rRNA, and is important in its secondary structure. It is located near the subunit interface in the base of the L7/L12 stalk, and near the tRNA binding site of the peptidyltransferase center. The chain is Large ribosomal subunit protein uL6 from Desulfatibacillum aliphaticivorans.